A 191-amino-acid chain; its full sequence is Putative NADH dehydrogenase/NAD(P)H nitroreductase (191 aa).

127–132 (AAHSLG) provides a ligand contact to NAD(+).

This sequence belongs to the nitroreductase family. FMN serves as cofactor.

In Methanothermobacter thermautotrophicus (strain ATCC 29096 / DSM 1053 / JCM 10044 / NBRC 100330 / Delta H) (Methanobacterium thermoautotrophicum), this protein is Putative NADH dehydrogenase/NAD(P)H nitroreductase.